The primary structure comprises 559 residues: 2-isopropylmalate synthase (559 aa).

A Pyruvate carboxyltransferase domain is found at Pro30–Lys304. Mg(2+)-binding residues include Asp39, His243, His245, and Asn279. The regulatory domain stretch occupies residues Val436 to Ser559.

Belongs to the alpha-IPM synthase/homocitrate synthase family. LeuA type 2 subfamily. In terms of assembly, homodimer. Mg(2+) is required as a cofactor.

It is found in the cytoplasm. The catalysed reaction is 3-methyl-2-oxobutanoate + acetyl-CoA + H2O = (2S)-2-isopropylmalate + CoA + H(+). Its pathway is amino-acid biosynthesis; L-leucine biosynthesis; L-leucine from 3-methyl-2-oxobutanoate: step 1/4. Functionally, catalyzes the condensation of the acetyl group of acetyl-CoA with 3-methyl-2-oxobutanoate (2-ketoisovalerate) to form 3-carboxy-3-hydroxy-4-methylpentanoate (2-isopropylmalate). This Alcanivorax borkumensis (strain ATCC 700651 / DSM 11573 / NCIMB 13689 / SK2) protein is 2-isopropylmalate synthase.